Reading from the N-terminus, the 408-residue chain is Serine/threonine transporter SstT (408 aa).

The next 9 membrane-spanning stretches (helical) occupy residues 11 to 31, 43 to 63, 82 to 102, 141 to 161, 192 to 212, 216 to 236, 290 to 310, 316 to 336, and 363 to 383; these read LANGSLVLQILVGIIAGVSLA, FLGSLFVGALKAIAPILVFIL, IVVLYLFGTFAAALTAVLLSM, ALMTGNYIGILAWGVGLGLAL, IGIFGLVAATFAETGFAAIAG, LLAVLLGAMAIIALIVNPLIV, IPLGATINMGGAAITITVLTL, LGIQVDLLTALLLSVVAAISA, and VAMQVVAVGFIIGVIQDAAET.

The protein belongs to the dicarboxylate/amino acid:cation symporter (DAACS) (TC 2.A.23) family.

The protein resides in the cell inner membrane. It catalyses the reaction L-serine(in) + Na(+)(in) = L-serine(out) + Na(+)(out). It carries out the reaction L-threonine(in) + Na(+)(in) = L-threonine(out) + Na(+)(out). Involved in the import of serine and threonine into the cell, with the concomitant import of sodium (symport system). The chain is Serine/threonine transporter SstT from Shewanella sp. (strain MR-4).